A 349-amino-acid chain; its full sequence is Histidinol-phosphate aminotransferase 1 (349 aa).

Lys-213 carries the post-translational modification N6-(pyridoxal phosphate)lysine.

The protein belongs to the class-II pyridoxal-phosphate-dependent aminotransferase family. Histidinol-phosphate aminotransferase subfamily. Homodimer. Pyridoxal 5'-phosphate serves as cofactor.

The catalysed reaction is L-histidinol phosphate + 2-oxoglutarate = 3-(imidazol-4-yl)-2-oxopropyl phosphate + L-glutamate. Its pathway is amino-acid biosynthesis; L-histidine biosynthesis; L-histidine from 5-phospho-alpha-D-ribose 1-diphosphate: step 7/9. This chain is Histidinol-phosphate aminotransferase 1, found in Carboxydothermus hydrogenoformans (strain ATCC BAA-161 / DSM 6008 / Z-2901).